We begin with the raw amino-acid sequence, 118 residues long: Na(+)/H(+) antiporter subunit G1 (118 aa).

3 helical membrane passes run 9–29 (LAVI…IGII), 47–67 (LGAI…DGYI), and 69–89 (MQLI…SHLI).

This sequence belongs to the CPA3 antiporters (TC 2.A.63) subunit G family. As to quaternary structure, may form a heterooligomeric complex that consists of seven subunits: mnhA1, mnhB1, mnhC1, mnhD1, mnhE1, mnhF1 and mnhG1.

The protein resides in the cell membrane. Its function is as follows. Mnh complex is a Na(+)/H(+) antiporter involved in Na(+) excretion. The chain is Na(+)/H(+) antiporter subunit G1 (mnhG1) from Staphylococcus haemolyticus (strain JCSC1435).